The sequence spans 202 residues: Ras-related protein RABD2b (202 aa).

GTP-binding positions include 15–23 (GDSGVGKSC), 33–40 (YLDSYIST), 63–67 (DTAGQ), 121–124 (NKND), and 151–153 (SAK). Positions 37 to 45 (YISTIGVDF) match the Effector region motif. A disordered region spans residues 174–202 (ASQPAGGAKPPTVQIRGQPVNQQSGCCSS). The segment covering 192 to 202 (PVNQQSGCCSS) has biased composition (polar residues). Residues cysteine 199 and cysteine 200 are each lipidated (S-geranylgeranyl cysteine).

It belongs to the small GTPase superfamily. Rab family.

The protein resides in the golgi apparatus. Its subcellular location is the trans-Golgi network membrane. The protein localises to the golgi apparatus membrane. Functionally, protein transport. Regulator of membrane traffic from the Golgi apparatus towards the endoplasmic reticulum (ER). In Arabidopsis thaliana (Mouse-ear cress), this protein is Ras-related protein RABD2b (RABD2B).